A 229-amino-acid chain; its full sequence is Histone H1 (229 aa).

Disordered stretches follow at residues 1 to 52 (MADT…SSHP) and 125 to 229 (APAL…RTRK). Over residues 32 to 45 (KEKKKVIAAKKPKS) the composition is skewed to basic residues. The 70-residue stretch at 50 to 119 (SHPSFFEMIS…KVKNSFKLPS (70 aa)) folds into the H15 domain. Low complexity predominate over residues 125–138 (APALAKKPTIPKPK). The span at 139–160 (VAAKPKTAKIGAKPKAKAKVAA) shows a compositional bias: basic residues. Composition is skewed to low complexity over residues 161-177 (KTKA…PAAK) and 185-205 (KPKT…VASP). Residues 206–229 (GKKKAVPVKKVKTVKSPAGKRTRK) are compositionally biased toward basic residues.

It belongs to the histone H1/H5 family.

The protein resides in the nucleus. Its subcellular location is the chromosome. Its function is as follows. Histones H1 are necessary for the condensation of nucleosome chains into higher-order structures. The sequence is that of Histone H1 from Euphorbia esula (Leafy spurge).